The chain runs to 154 residues: RxLR effector protein PITG_12737 (154 aa).

An N-terminal signal peptide occupies residues 1–16; the sequence is MRVYFILILAVATVSG. A RxLR-dEER motif is present at residues 42–58; it reads RLLRAELTTDETYPEER.

The protein belongs to the RxLR effector family.

The protein localises to the secreted. It localises to the host nucleus. The protein resides in the host cytoplasm. Functionally, effector that enhances P.infestans colonization of Nicotiana benthamiana leaves. The sequence is that of RxLR effector protein PITG_12737 from Phytophthora infestans (strain T30-4) (Potato late blight agent).